A 298-amino-acid chain; its full sequence is Probable tRNA(His) guanylyltransferase (298 aa).

Mg(2+) contacts are provided by Asp-58, Gly-59, and Asp-105. GTP-binding positions include 58 to 63 (DGRNFH) and 104 to 105 (SD).

This sequence belongs to the tRNA(His) guanylyltransferase family. Homotetramer. Interacts with MFN1 and MFN2; functions as a guanyl-nucleotide exchange factor/GEF for MFN2 and also probably MFN1. It depends on Mg(2+) as a cofactor.

Its subcellular location is the cytoplasm. The protein resides in the mitochondrion. The enzyme catalyses a 5'-end ribonucleotide-tRNA(His) + GTP + ATP + H2O = a 5'-end phospho-guanosine-ribonucleotide-tRNA(His) + AMP + 2 diphosphate + H(+). Functionally, adds a GMP to the 5'-end of tRNA(His) after transcription and RNase P cleavage. This step is essential for proper recognition of the tRNA and for the fidelity of protein synthesis. Also functions as a guanyl-nucleotide exchange factor/GEF for the MFN1 and MFN2 mitofusins thereby regulating mitochondrial fusion. By regulating both mitochondrial dynamics and bioenergetic function, it contributes to cell survival following oxidative stress. This Bos taurus (Bovine) protein is Probable tRNA(His) guanylyltransferase (THG1L).